A 124-amino-acid chain; its full sequence is Protein MGF 110-4L (124 aa).

The N-terminal stretch at 1-28 is a signal peptide; it reads MLVIFLGILGLLANQVLGLPTQAGGHLR. The N-linked (GlcNAc...) asparagine; by host glycan is linked to asparagine 64. A Prevents secretion from ER motif is present at residues 121–124; the sequence is KEDL.

The protein belongs to the asfivirus MGF 110 family.

It localises to the virion. The protein resides in the host endoplasmic reticulum-Golgi intermediate compartment. Its function is as follows. Causes the redistribution of lumenal ER protein to an enlarged ERGIC compartment. The protein is Protein MGF 110-4L of African swine fever virus (strain Badajoz 1971 Vero-adapted) (Ba71V).